The chain runs to 365 residues: UDP-N-acetylglucosamine--N-acetylmuramyl-(pentapeptide) pyrophosphoryl-undecaprenol N-acetylglucosamine transferase (365 aa).

Residues 17–19 (TGG), Asn-129, Arg-167, Ser-194, Ile-250, 269–274 (ALTVSE), and Gln-295 contribute to the UDP-N-acetyl-alpha-D-glucosamine site.

It belongs to the glycosyltransferase 28 family. MurG subfamily.

The protein resides in the cell inner membrane. The catalysed reaction is di-trans,octa-cis-undecaprenyl diphospho-N-acetyl-alpha-D-muramoyl-L-alanyl-D-glutamyl-meso-2,6-diaminopimeloyl-D-alanyl-D-alanine + UDP-N-acetyl-alpha-D-glucosamine = di-trans,octa-cis-undecaprenyl diphospho-[N-acetyl-alpha-D-glucosaminyl-(1-&gt;4)]-N-acetyl-alpha-D-muramoyl-L-alanyl-D-glutamyl-meso-2,6-diaminopimeloyl-D-alanyl-D-alanine + UDP + H(+). It functions in the pathway cell wall biogenesis; peptidoglycan biosynthesis. Cell wall formation. Catalyzes the transfer of a GlcNAc subunit on undecaprenyl-pyrophosphoryl-MurNAc-pentapeptide (lipid intermediate I) to form undecaprenyl-pyrophosphoryl-MurNAc-(pentapeptide)GlcNAc (lipid intermediate II). The sequence is that of UDP-N-acetylglucosamine--N-acetylmuramyl-(pentapeptide) pyrophosphoryl-undecaprenol N-acetylglucosamine transferase from Shewanella sediminis (strain HAW-EB3).